The following is a 357-amino-acid chain: Neuronal-specific septin-3 (357 aa).

Residues Met1–Thr10 show a composition bias toward basic and acidic residues. Residues Met1–Met29 form a disordered region. The 273-residue stretch at Thr58 to Asp330 folds into the Septin-type G domain. Residues Gly68–Ser75 form a G1 motif region. Gly68–Ser75 lines the GTP pocket. Position 91 is a phosphoserine (Ser91). Residue Thr102 coordinates GTP. Residues Asp125 to Gly128 are G3 motif. Residues Ala207–Asp210 are G4 motif. Residues Lys208–Glu216, Gly264, and Arg279 each bind GTP.

This sequence belongs to the TRAFAC class TrmE-Era-EngA-EngB-Septin-like GTPase superfamily. Septin GTPase family. As to quaternary structure, septins polymerize into heterooligomeric protein complexes that form filaments, and can associate with cellular membranes, actin filaments and microtubules. GTPase activity is required for filament formation. Phosphorylated by PKG on serine residues. Phosphorylated by PKG on Ser-91.

Its subcellular location is the cytoplasm. The protein resides in the cytoskeleton. It is found in the synapse. Its function is as follows. Filament-forming cytoskeletal GTPase. May play a role in cytokinesis (Potential). This Bos taurus (Bovine) protein is Neuronal-specific septin-3.